We begin with the raw amino-acid sequence, 153 residues long: Small ribosomal subunit protein uS12m (153 aa).

The transit peptide at 1–20 (MLSRFMSNTWCTPLRQAQRL) directs the protein to the mitochondrion.

Belongs to the universal ribosomal protein uS12 family. In terms of assembly, component of the mitochondrial small ribosomal subunit (mt-SSU). Mature yeast 74S mitochondrial ribosomes consist of a small (37S) and a large (54S) subunit. The 37S small subunit contains a 15S ribosomal RNA (15S mt-rRNA) and 34 different proteins. The 54S large subunit contains a 21S rRNA (21S mt-rRNA) and 46 different proteins. uS12m forms part of the decoding center of the mt-SSU.

It is found in the mitochondrion. In terms of biological role, component of the mitochondrial ribosome (mitoribosome), a dedicated translation machinery responsible for the synthesis of mitochondrial genome-encoded proteins, including at least some of the essential transmembrane subunits of the mitochondrial respiratory chain. The mitoribosomes are attached to the mitochondrial inner membrane and translation products are cotranslationally integrated into the membrane. uS12m is required for respiratory growth. This is Small ribosomal subunit protein uS12m (MRPS12) from Saccharomyces cerevisiae (strain ATCC 204508 / S288c) (Baker's yeast).